A 433-amino-acid polypeptide reads, in one-letter code: Protein root UVB sensitive 2, chloroplastic (433 aa).

This sequence belongs to the RUS1 family. As to quaternary structure, interacts (via the DUF647 domain) with RUS1 (via the DUF647 domain). As to expression, expressed throughout the plant, with a higher expression near the root apical meristem, in the cortex region of the root elongation zone, in lateral roots and emerging lateral roots. Not detected in extreme root apical meristem or root cap.

The protein resides in the plastid. In terms of biological role, involved in a root UV-B sensing pathway and in the protection against the hypersensitivity to very low-fluence-rate (VLF) UV-B. RSU1 and RUS2 are probably both negative modulators of the same UV-B perception pathway, which when overstimulated in the roots causes a block to postgermination development. Required for polar auxin transport and to maintain the normal levels of PIN proteins in the root. The chain is Protein root UVB sensitive 2, chloroplastic from Arabidopsis thaliana (Mouse-ear cress).